Here is a 295-residue protein sequence, read N- to C-terminus: 33 kDa chaperonin (295 aa).

2 disulfide bridges follow: Cys238–Cys240 and Cys271–Cys274.

It belongs to the HSP33 family. Under oxidizing conditions two disulfide bonds are formed involving the reactive cysteines. Under reducing conditions zinc is bound to the reactive cysteines and the protein is inactive.

The protein localises to the cytoplasm. Its function is as follows. Redox regulated molecular chaperone. Protects both thermally unfolding and oxidatively damaged proteins from irreversible aggregation. Plays an important role in the bacterial defense system toward oxidative stress. This is 33 kDa chaperonin from Clostridium botulinum (strain Eklund 17B / Type B).